We begin with the raw amino-acid sequence, 307 residues long: Aspartate carbamoyltransferase catalytic subunit (307 aa).

Carbamoyl phosphate contacts are provided by Arg-54 and Thr-55. An L-aspartate-binding site is contributed by Lys-83. Carbamoyl phosphate-binding residues include Arg-104, His-132, and Gln-135. Residues Arg-165 and Arg-228 each coordinate L-aspartate. Carbamoyl phosphate is bound by residues Leu-267 and Pro-268.

Belongs to the aspartate/ornithine carbamoyltransferase superfamily. ATCase family. Heterododecamer (2C3:3R2) of six catalytic PyrB chains organized as two trimers (C3), and six regulatory PyrI chains organized as three dimers (R2).

The catalysed reaction is carbamoyl phosphate + L-aspartate = N-carbamoyl-L-aspartate + phosphate + H(+). Its pathway is pyrimidine metabolism; UMP biosynthesis via de novo pathway; (S)-dihydroorotate from bicarbonate: step 2/3. In terms of biological role, catalyzes the condensation of carbamoyl phosphate and aspartate to form carbamoyl aspartate and inorganic phosphate, the committed step in the de novo pyrimidine nucleotide biosynthesis pathway. In Clostridium botulinum (strain Alaska E43 / Type E3), this protein is Aspartate carbamoyltransferase catalytic subunit.